The sequence spans 403 residues: Phosphoglycerate kinase (403 aa).

Residues D24–N26, R39, H62–R65, R121, and R161 contribute to the substrate site. ATP is bound by residues K211, G299, E330, and G359–S362.

It belongs to the phosphoglycerate kinase family. In terms of assembly, monomer.

It is found in the cytoplasm. It carries out the reaction (2R)-3-phosphoglycerate + ATP = (2R)-3-phospho-glyceroyl phosphate + ADP. It participates in carbohydrate degradation; glycolysis; pyruvate from D-glyceraldehyde 3-phosphate: step 2/5. The polypeptide is Phosphoglycerate kinase (Rhodococcus opacus (strain B4)).